The primary structure comprises 2555 residues: Ubiquitin carboxyl-terminal hydrolase 9Y (2555 aa).

Positions 1-66 (MTAITHGSPV…APPQHEDEEP (66 aa)) are disordered. Residues 13–45 (NDSQGQVLDGQSQHLFQQNQTSSPDSSNENSVA) show a composition bias toward polar residues. At Ser589 the chain carries Phosphoserine. Phosphothreonine is present on Thr591. Residues 972-997 (NMPSSPDSSSDSSTASPGNHRNHYND) are disordered. The span at 974-984 (PSSPDSSSDSS) shows a compositional bias: low complexity. In terms of domain architecture, USP spans 1559–1958 (VGLKNAGATC…NAYILFYEQM (400 aa)). The active-site Nucleophile is Cys1568. Residues Cys1729, His1731, Cys1773, and Cys1776 each coordinate Zn(2+). The active-site Proton acceptor is the His1881. At Ser2444 the chain carries Phosphoserine. A compositionally biased stretch (acidic residues) spans 2476 to 2485 (PEEEPDDQDA). Residues 2476–2555 (PEEEPDDQDA…EVSSPQMKDQ (80 aa)) are disordered. Polar residues-rich tracts occupy residues 2504–2514 (PASQYQQNNHV) and 2528–2555 (NNPQ…MKDQ). Phosphotyrosine is present on Tyr2541. Ser2548 bears the Phosphoserine mark.

It belongs to the peptidase C19 family. In terms of tissue distribution, widely expressed in embryonic and adult tissues.

The catalysed reaction is Thiol-dependent hydrolysis of ester, thioester, amide, peptide and isopeptide bonds formed by the C-terminal Gly of ubiquitin (a 76-residue protein attached to proteins as an intracellular targeting signal).. The protein operates within protein modification; protein ubiquitination. Its function is as follows. Deubiquitinase that mediates deubiquitination of target proteins. May stabilize target proteins that are important for male germ cell development. The polypeptide is Ubiquitin carboxyl-terminal hydrolase 9Y (Homo sapiens (Human)).